Reading from the N-terminus, the 228-residue chain is DOPA 4,5-dioxygenase (228 aa).

As to quaternary structure, homodimer. In terms of tissue distribution, expressed at high level in coloured cap tissue and at least 10 times lower level in the stipe.

It is found in the cytoplasm. It participates in pigment biosynthesis; betalain biosynthesis. Extradiol dioxygenase that opens up the cyclic ring of DOPA between carbons 4 and 5 thus producing an unstable seco-DOPA that rearranges non-enzymatically to betalamic acid. Can also catalyze the formation of muscaflavin (a pigment found in the hygrocybe mushrooms family and of some amanita species only) by a 2,3-extradiol cleavage of DOPA. In Amanita muscaria (Fly agaric), this protein is DOPA 4,5-dioxygenase (DODA).